The sequence spans 406 residues: 2,3-bisphosphoglycerate-independent phosphoglycerate mutase (406 aa).

The protein belongs to the BPG-independent phosphoglycerate mutase family. A-PGAM subfamily.

It catalyses the reaction (2R)-2-phosphoglycerate = (2R)-3-phosphoglycerate. It participates in carbohydrate degradation; glycolysis; pyruvate from D-glyceraldehyde 3-phosphate: step 3/5. Its function is as follows. Catalyzes the interconversion of 2-phosphoglycerate and 3-phosphoglycerate. The polypeptide is 2,3-bisphosphoglycerate-independent phosphoglycerate mutase (Methanococcus maripaludis (strain C6 / ATCC BAA-1332)).